A 356-amino-acid chain; its full sequence is Dual-specificity RNA methyltransferase RlmN (356 aa).

Glu95 acts as the Proton acceptor in catalysis. A Radical SAM core domain is found at 101–332 (EDERGTLCIS…VTVIRDRRGE (232 aa)). Residues Cys108 and Cys338 are joined by a disulfide bond. [4Fe-4S] cluster is bound by residues Cys115, Cys119, and Cys122. S-adenosyl-L-methionine-binding positions include 165–166 (GE), Ser197, 219–221 (SLH), and Asn295. The S-methylcysteine intermediate role is filled by Cys338.

Belongs to the radical SAM superfamily. RlmN family. It depends on [4Fe-4S] cluster as a cofactor.

It localises to the cytoplasm. It carries out the reaction adenosine(2503) in 23S rRNA + 2 reduced [2Fe-2S]-[ferredoxin] + 2 S-adenosyl-L-methionine = 2-methyladenosine(2503) in 23S rRNA + 5'-deoxyadenosine + L-methionine + 2 oxidized [2Fe-2S]-[ferredoxin] + S-adenosyl-L-homocysteine. It catalyses the reaction adenosine(37) in tRNA + 2 reduced [2Fe-2S]-[ferredoxin] + 2 S-adenosyl-L-methionine = 2-methyladenosine(37) in tRNA + 5'-deoxyadenosine + L-methionine + 2 oxidized [2Fe-2S]-[ferredoxin] + S-adenosyl-L-homocysteine. Its function is as follows. Specifically methylates position 2 of adenine 2503 in 23S rRNA and position 2 of adenine 37 in tRNAs. m2A2503 modification seems to play a crucial role in the proofreading step occurring at the peptidyl transferase center and thus would serve to optimize ribosomal fidelity. This is Dual-specificity RNA methyltransferase RlmN from Magnetococcus marinus (strain ATCC BAA-1437 / JCM 17883 / MC-1).